A 139-amino-acid polypeptide reads, in one-letter code: D-ribose pyranase (139 aa).

The active-site Proton donor is H20. Substrate-binding positions include D28, H106, and 128–130; that span reads YAN.

It belongs to the RbsD / FucU family. RbsD subfamily. In terms of assembly, homodecamer.

It is found in the cytoplasm. It carries out the reaction beta-D-ribopyranose = beta-D-ribofuranose. It participates in carbohydrate metabolism; D-ribose degradation; D-ribose 5-phosphate from beta-D-ribopyranose: step 1/2. Functionally, catalyzes the interconversion of beta-pyran and beta-furan forms of D-ribose. The polypeptide is D-ribose pyranase (Proteus mirabilis (strain HI4320)).